The following is a 153-amino-acid chain: MVVKAVCVINGDAKGTVFFEQEGEGCPVKVTGEVTGLAKGQHGFHVHEFGDNTNGCMSSGPHFNPYQKEHGAPTDENRHLGDLGNIIANGDGPTPVNICDCKITLLGANSIIGRTVVVHADPDDLGKGGHELSKTTGNAGARIGCGVIGIAKI.

The Cu cation site is built by histidine 45, histidine 47, and histidine 62. Residues cysteine 56 and cysteine 145 are joined by a disulfide bond. Residues histidine 62, histidine 70, histidine 79, and aspartate 82 each coordinate Zn(2+). Histidine 119 lines the Cu cation pocket.

The protein belongs to the Cu-Zn superoxide dismutase family. Homodimer. It depends on Cu cation as a cofactor. The cofactor is Zn(2+).

The protein resides in the cytoplasm. The enzyme catalyses 2 superoxide + 2 H(+) = H2O2 + O2. Its function is as follows. Destroys radicals which are normally produced within the cells and which are toxic to biological systems. This chain is Superoxide dismutase [Cu-Zn], found in Drosophila virilis (Fruit fly).